The primary structure comprises 466 residues: 3-isopropylmalate dehydratase large subunit (466 aa).

[4Fe-4S] cluster is bound by residues cysteine 347, cysteine 407, and cysteine 410.

The protein belongs to the aconitase/IPM isomerase family. LeuC type 1 subfamily. In terms of assembly, heterodimer of LeuC and LeuD. [4Fe-4S] cluster is required as a cofactor.

The catalysed reaction is (2R,3S)-3-isopropylmalate = (2S)-2-isopropylmalate. Its pathway is amino-acid biosynthesis; L-leucine biosynthesis; L-leucine from 3-methyl-2-oxobutanoate: step 2/4. Catalyzes the isomerization between 2-isopropylmalate and 3-isopropylmalate, via the formation of 2-isopropylmaleate. The chain is 3-isopropylmalate dehydratase large subunit from Escherichia coli O127:H6 (strain E2348/69 / EPEC).